A 366-amino-acid polypeptide reads, in one-letter code: Putative actin-9 (366 aa).

It belongs to the actin family. Polymerization of globular actin (G-actin) leads to a structural filament (F-actin) in the form of a two-stranded helix. The binding of profilin to monomeric G-actin cause the sequestration of actin into profilactin complexes, and prevents the polymerization.

The protein resides in the cytoplasm. It is found in the cytoskeleton. In terms of biological role, actins are highly conserved proteins that are involved in various types of cell motility and are ubiquitously expressed in all eukaryotic cells. Essential component of cell cytoskeleton; plays an important role in cytoplasmic streaming, cell shape determination, cell division, organelle movement and extension growth. This is Putative actin-9 (ACT9) from Arabidopsis thaliana (Mouse-ear cress).